The sequence spans 30 residues: Peptidase 1 (30 aa).

It belongs to the peptidase C1 family.

The protein localises to the secreted. It catalyses the reaction Broad endopeptidase specificity.. Functionally, thiol protease that hydrolyzes proteins, with a preference for Phe or basic residues. This Dermatophagoides microceras (House dust mite) protein is Peptidase 1 (DERM1).